Consider the following 1144-residue polypeptide: Probable translation initiation factor IF-2 (1144 aa).

The 131-residue stretch at 232–362 (FAGVMFGDGS…LSLLLLRFGI (131 aa)) folds into the DOD-type homing endonuclease domain. In terms of domain architecture, tr-type G spans 551-768 (TTETHNFVAN…LIAGLSQKYL (218 aa)). GTP is bound by residues 624–628 (DTPGH) and 678–681 (NKID).

It belongs to the TRAFAC class translation factor GTPase superfamily. Classic translation factor GTPase family. IF-2 subfamily. In terms of processing, this protein undergoes a protein self splicing that involves a post-translational excision of the intervening region (intein) followed by peptide ligation.

Its function is as follows. Function in general translation initiation by promoting the binding of the formylmethionine-tRNA to ribosomes. Seems to function along with eIF-2. The polypeptide is Probable translation initiation factor IF-2 (infB) (Thermococcus kodakarensis (strain ATCC BAA-918 / JCM 12380 / KOD1) (Pyrococcus kodakaraensis (strain KOD1))).